The chain runs to 214 residues: Protein DEHYDRATION-INDUCED 19 homolog 5 (214 aa).

Position 110 is a phosphoserine (Ser-110). The segment at 148–185 is disordered; the sequence is PKKSKLVQPDSSSEASMEDNSLIRDSTEKDWESPSPLS. Residues 156–166 are compositionally biased toward polar residues; the sequence is PDSSSEASMED. The segment covering 168-179 has biased composition (basic and acidic residues); that stretch reads SLIRDSTEKDWE.

This sequence belongs to the Di19 family. Post-translationally, phosphorylated in vitro by CPK3 or CPK11. In terms of tissue distribution, expressed in seedlings, roots, leaves, stems, flowers and siliques.

It is found in the nucleus. In Arabidopsis thaliana (Mouse-ear cress), this protein is Protein DEHYDRATION-INDUCED 19 homolog 5 (DI19-5).